The primary structure comprises 795 residues: Histidine biosynthesis trifunctional protein (795 aa).

The tract at residues 1–225 (MLPVVPVFNA…VVRQGGSGSF (225 aa)) is phosphoribosyl-AMP cyclohydrolase. The phosphoribosyl-ATP pyrophosphohydrolase stretch occupies residues 226 to 308 (CHLETESCFG…FYFAMARLVA (83 aa)). The interval 309-795 (NGVSLEDVER…KLGLLPSGFE (487 aa)) is histidinol dehydrogenase. The Zn(2+) site is built by Gln614 and His617. Catalysis depends on residues Glu683 and His684. Residues Asp717 and His776 each coordinate Zn(2+).

The protein in the C-terminal section; belongs to the histidinol dehydrogenase family. It depends on Zn(2+) as a cofactor.

The enzyme catalyses 1-(5-phospho-beta-D-ribosyl)-5'-AMP + H2O = 1-(5-phospho-beta-D-ribosyl)-5-[(5-phospho-beta-D-ribosylamino)methylideneamino]imidazole-4-carboxamide. The catalysed reaction is 1-(5-phospho-beta-D-ribosyl)-ATP + H2O = 1-(5-phospho-beta-D-ribosyl)-5'-AMP + diphosphate + H(+). It carries out the reaction L-histidinol + 2 NAD(+) + H2O = L-histidine + 2 NADH + 3 H(+). It functions in the pathway amino-acid biosynthesis; L-histidine biosynthesis; L-histidine from 5-phospho-alpha-D-ribose 1-diphosphate: step 2/9. Its pathway is amino-acid biosynthesis; L-histidine biosynthesis; L-histidine from 5-phospho-alpha-D-ribose 1-diphosphate: step 3/9. It participates in amino-acid biosynthesis; L-histidine biosynthesis; L-histidine from 5-phospho-alpha-D-ribose 1-diphosphate: step 9/9. This chain is Histidine biosynthesis trifunctional protein (HIS4), found in Kluyveromyces lactis (strain ATCC 8585 / CBS 2359 / DSM 70799 / NBRC 1267 / NRRL Y-1140 / WM37) (Yeast).